The chain runs to 536 residues: Beta-hexosaminidase subunit beta (536 aa).

Residues 1–31 (MPQSPRSAPGLLLLQALVSLVSLALVAPARL) form the signal peptide. The N-linked (GlcNAc...) asparagine glycan is linked to Asn-63. An intrachain disulfide couples Cys-70 to Cys-116. 2 N-linked (GlcNAc...) asparagine glycosylation sites follow: Asn-169 and Asn-306. 2 disulfide bridges follow: Cys-288/Cys-339 and Cys-513/Cys-530. Glu-334 (proton donor) is an active-site residue.

The protein belongs to the glycosyl hydrolase 20 family. As to quaternary structure, there are 3 forms of beta-hexosaminidase: hexosaminidase A is a heterodimer composed of one subunit alpha and one subunit beta (chain A and B); hexosaminidase B is a homodimer of two beta subunits (two chains A and B); hexosaminidase S is a homodimer of two alpha subunits. The composition of the dimer (isozyme A versus isozyme S) has a significant effect on the substrate specificity of the alpha subunit active site.

It localises to the lysosome. It is found in the cytoplasmic vesicle. The protein resides in the secretory vesicle. Its subcellular location is the cortical granule. It catalyses the reaction Hydrolysis of terminal non-reducing N-acetyl-D-hexosamine residues in N-acetyl-beta-D-hexosaminides.. It carries out the reaction N-acetyl-beta-D-galactosaminyl-(1-&gt;4)-beta-D-3-sulfogalactosyl-(1-&gt;4)-beta-D-glucosyl-(1&lt;-&gt;1')-ceramide + H2O = a beta-D-3-sulfogalactosyl-(1-&gt;4)-beta-D-glucosyl-(1&lt;-&gt;1')-ceramide + N-acetyl-beta-D-galactosamine. The enzyme catalyses a ganglioside GM2 (d18:1(4E)) + H2O = a ganglioside GM3 (d18:1(4E)) + N-acetyl-beta-D-galactosamine. The catalysed reaction is a ganglioside GM2 + H2O = a ganglioside GM3 + N-acetyl-beta-D-galactosamine. It catalyses the reaction beta-D-GalNAc-(1-&gt;4)-alpha-L-IdoA-(1-&gt;3)-beta-D-GalNAc-4-sulfate-(1-&gt;4)-alpha-L-IdoA-(1-&gt;3)-D-GalNAc-4-sulfate + H2O = alpha-L-IdoA-(1-&gt;3)-beta-D-GalNAc-4-sulfate-(1-&gt;4)-alpha-L-IdoA-(1-&gt;3)-D-GalNAc-4-sulfate + N-acetyl-D-galactosamine. It carries out the reaction N-acetyl-beta-D-6-sulfogalactosaminyl-(1-&gt;4)-alpha-L-iduronyl-(1-&gt;3)-N-acetyl-D-6-sulfogalactosamine + H2O = alpha-L-iduronyl-(1-&gt;3)-N-acetyl-D-6-sulfogalactosamine + N-acetyl-D-6-sulfogalactosamine. Addition of GM2A stimulates the hydrolysis of sulfated glycosphingolipid SM2 and the ganglioside GM2. In terms of biological role, hydrolyzes the non-reducing end N-acetyl-D-hexosamine and/or sulfated N-acetyl-D-hexosamine of glycoconjugates, such as the oligosaccharide moieties from proteins and neutral glycolipids, or from certain mucopolysaccharides. The isozyme B does not hydrolyze each of these substrates, however hydrolyzes efficiently neutral oligosaccharide. Only the isozyme A is responsible for the degradation of GM2 gangliosides in the presence of GM2A. During fertilization is responsible, at least in part, for the zona block to polyspermy. Present in the cortical granules of non-activated oocytes, is exocytosed during the cortical reaction in response to oocyte activation and inactivates the sperm galactosyltransferase-binding site, accounting for the block in sperm binding to the zona pellucida. The polypeptide is Beta-hexosaminidase subunit beta (Mus musculus (Mouse)).